The chain runs to 354 residues: 3-dehydroquinate synthase (354 aa).

NAD(+) is bound by residues 100-104, 124-125, Lys136, Lys145, and 163-166; these read GATGD, TT, and FLAT. Zn(2+)-binding residues include Glu178, His242, and His256.

It belongs to the sugar phosphate cyclases superfamily. Dehydroquinate synthase family. It depends on Co(2+) as a cofactor. Zn(2+) serves as cofactor. The cofactor is NAD(+).

It is found in the cytoplasm. The catalysed reaction is 7-phospho-2-dehydro-3-deoxy-D-arabino-heptonate = 3-dehydroquinate + phosphate. Its pathway is metabolic intermediate biosynthesis; chorismate biosynthesis; chorismate from D-erythrose 4-phosphate and phosphoenolpyruvate: step 2/7. In terms of biological role, catalyzes the conversion of 3-deoxy-D-arabino-heptulosonate 7-phosphate (DAHP) to dehydroquinate (DHQ). The chain is 3-dehydroquinate synthase from Staphylococcus haemolyticus (strain JCSC1435).